Here is a 358-residue protein sequence, read N- to C-terminus: Histidinol-phosphate aminotransferase (358 aa).

Residue Lys217 is modified to N6-(pyridoxal phosphate)lysine.

This sequence belongs to the class-II pyridoxal-phosphate-dependent aminotransferase family. Histidinol-phosphate aminotransferase subfamily. Homodimer. The cofactor is pyridoxal 5'-phosphate.

It catalyses the reaction L-histidinol phosphate + 2-oxoglutarate = 3-(imidazol-4-yl)-2-oxopropyl phosphate + L-glutamate. The protein operates within amino-acid biosynthesis; L-histidine biosynthesis; L-histidine from 5-phospho-alpha-D-ribose 1-diphosphate: step 7/9. The sequence is that of Histidinol-phosphate aminotransferase from Ruminiclostridium cellulolyticum (strain ATCC 35319 / DSM 5812 / JCM 6584 / H10) (Clostridium cellulolyticum).